A 502-amino-acid polypeptide reads, in one-letter code: Probable glycine dehydrogenase (decarboxylating) subunit 2 (502 aa).

Lys-273 carries the N6-(pyridoxal phosphate)lysine modification.

Belongs to the GcvP family. C-terminal subunit subfamily. As to quaternary structure, the glycine cleavage system is composed of four proteins: P, T, L and H. In this organism, the P 'protein' is a heterodimer of two subunits. Requires pyridoxal 5'-phosphate as cofactor.

It catalyses the reaction N(6)-[(R)-lipoyl]-L-lysyl-[glycine-cleavage complex H protein] + glycine + H(+) = N(6)-[(R)-S(8)-aminomethyldihydrolipoyl]-L-lysyl-[glycine-cleavage complex H protein] + CO2. Functionally, the glycine cleavage system catalyzes the degradation of glycine. The P protein binds the alpha-amino group of glycine through its pyridoxal phosphate cofactor; CO(2) is released and the remaining methylamine moiety is then transferred to the lipoamide cofactor of the H protein. In Pyrococcus furiosus (strain ATCC 43587 / DSM 3638 / JCM 8422 / Vc1), this protein is Probable glycine dehydrogenase (decarboxylating) subunit 2.